Reading from the N-terminus, the 498-residue chain is Calcitonin receptor (498 aa).

The N-terminal stretch at 1-29 is a signal peptide; sequence MRFTLTRWCLTLFIFLNRPLPVLPDSADG. Topologically, residues 30 to 147 are extracellular; the sequence is AHTPTLEPEP…FTPDKLQNAY (118 aa). 3 disulfides stabilise this stretch: Cys56-Cys82, Cys73-Cys113, and Cys96-Cys135. Asn74, Asn126, and Asn131 each carry an N-linked (GlcNAc...) asparagine glycan. Residues 148-170 traverse the membrane as a helical segment; it reads ILYYLAIVGHSLSILTLLISLGI. The Cytoplasmic segment spans residues 171–198; it reads FMFLRYFNLLAPFNALLYPTRSISCQRV. Residues 199–219 form a helical membrane-spanning segment; sequence TLHKNMFLTYVLNSIIIIVHL. At 220–236 the chain is on the extracellular side; the sequence is VVIVPNGELVKRDPPIC. Cys236 and Cys306 are oxidised to a cystine. A helical membrane pass occupies residues 237–259; that stretch reads KVLHFFHQYMMSCNYFWMLCEGV. The Cytoplasmic portion of the chain corresponds to 260 to 276; it reads YLHTLIVVSVFAEGQRL. Residues 277–297 traverse the membrane as a helical segment; that stretch reads WWYHVLGWGFPLIPTTAHAIT. Topologically, residues 298–313 are extracellular; it reads RAVLFNDNCWLSVDTN. A helical membrane pass occupies residues 314–337; the sequence is LLYIIHGPVMAALVVNFFFLLNIL. At 338–357 the chain is on the cytoplasmic side; sequence RVLVKKLKESQEAESHMYLK. The helical transmembrane segment at 358–376 threads the bilayer; that stretch reads AVRATLILVPLLGVQFVVL. Residues 377-384 lie on the Extracellular side of the membrane; the sequence is PWRPSTPL. The chain crosses the membrane as a helical span at residues 385–411; it reads LGKIYDYVVHSLIHFQGFFVAIIYCFC. At 412–498 the chain is on the cytoplasmic side; it reads NHEVQGALKR…MEVLEQETSA (87 aa).

Belongs to the G-protein coupled receptor 2 family. In terms of assembly, heterodimer of CALCR and RAMP1, RAMP2 or RAMP3; the receptor complexes function as AMYR1, AMYR2 and AMYR3 receptors, respectively, and respond to amylin/IAPP, calcitonin/CT and CGRP1 ligands. Interacts with GPRASP2.

The protein localises to the cell membrane. Functionally, g protein-coupled receptor activated by ligand peptides amylin (IAPP), calcitonin (CT/CALCA) and calcitonin gene-related peptide type 1 (CGRP1/CALCA). CALCR interacts with receptor-activity-modifying proteins RAMP1, 2 and 3 to form receptor complexes AMYR1, 2 and 3, respectively. IAPP, CT and CGRP1 activate CALCR and AMYRs with distinct modes of receptor activation resulting in specific phenotypes. Ligand binding causes a conformation change that triggers signaling via guanine nucleotide-binding proteins (G proteins) and modulates the activity of downstream effectors. Activates cAMP-dependent pathway. The chain is Calcitonin receptor from Sus scrofa (Pig).